The primary structure comprises 543 residues: CTP synthase (543 aa).

Residues 1–265 (MARYIFITGG…DGEVLRHFGL (265 aa)) form an amidoligase domain region. S13 lines the CTP pocket. S13 lines the UTP pocket. 14-19 (SLGKGL) serves as a coordination point for ATP. Y54 lines the L-glutamine pocket. Residue D71 participates in ATP binding. Mg(2+) contacts are provided by D71 and E139. CTP contacts are provided by residues 146 to 148 (DIE), 186 to 191 (KTKPTQ), and K222. Residues 186–191 (KTKPTQ) and K222 each bind UTP. The Glutamine amidotransferase type-1 domain maps to 290-542 (TIGVVGKYVG…IAAAVKQARL (253 aa)). L-glutamine is bound at residue G354. Catalysis depends on C381, which acts as the Nucleophile; for glutamine hydrolysis. Residues 382-385 (LGMQ), E405, and R470 contribute to the L-glutamine site. Catalysis depends on residues H515 and E517.

It belongs to the CTP synthase family. Homotetramer.

It catalyses the reaction UTP + L-glutamine + ATP + H2O = CTP + L-glutamate + ADP + phosphate + 2 H(+). The enzyme catalyses L-glutamine + H2O = L-glutamate + NH4(+). The catalysed reaction is UTP + NH4(+) + ATP = CTP + ADP + phosphate + 2 H(+). Its pathway is pyrimidine metabolism; CTP biosynthesis via de novo pathway; CTP from UDP: step 2/2. Its activity is regulated as follows. Allosterically activated by GTP, when glutamine is the substrate; GTP has no effect on the reaction when ammonia is the substrate. The allosteric effector GTP functions by stabilizing the protein conformation that binds the tetrahedral intermediate(s) formed during glutamine hydrolysis. Inhibited by the product CTP, via allosteric rather than competitive inhibition. Its function is as follows. Catalyzes the ATP-dependent amination of UTP to CTP with either L-glutamine or ammonia as the source of nitrogen. Regulates intracellular CTP levels through interactions with the four ribonucleotide triphosphates. This Novosphingobium aromaticivorans (strain ATCC 700278 / DSM 12444 / CCUG 56034 / CIP 105152 / NBRC 16084 / F199) protein is CTP synthase.